The chain runs to 241 residues: E3 ubiquitin-protein ligase RNF166 (241 aa).

Residues 8–30 are disordered; the sequence is VASSQHRQHHSHQSLATPSSADS. Residues 37–77 form an RING-type zinc finger; sequence CPICLEVYYKPVAIGSCGHTFCGECLQPCLQVSSPLCPLCR. Positions 102, 105, 117, and 121 each coordinate Zn(2+). The segment at 102-121 adopts a C2HC RNF-type zinc-finger fold; that stretch reads CRGCSKKVTLAKMRAHISSC. A UIM domain is found at 225-241; the sequence is DEEAALQAALALSLSEN.

The protein localises to the cytoplasm. The enzyme catalyses S-ubiquitinyl-[E2 ubiquitin-conjugating enzyme]-L-cysteine + [acceptor protein]-L-lysine = [E2 ubiquitin-conjugating enzyme]-L-cysteine + N(6)-ubiquitinyl-[acceptor protein]-L-lysine.. It functions in the pathway protein modification; protein ubiquitination. E3 ubiquitin-protein ligase that promotes the ubiquitination of different substrates. The sequence is that of E3 ubiquitin-protein ligase RNF166 (rnf166) from Xenopus laevis (African clawed frog).